We begin with the raw amino-acid sequence, 203 residues long: Small ribosomal subunit protein uS4 (203 aa).

Residues 93–154 (CRFDNVVFRA…KSRNMDAVRN (62 aa)) form the S4 RNA-binding domain.

The protein belongs to the universal ribosomal protein uS4 family. In terms of assembly, part of the 30S ribosomal subunit. Contacts protein S5. The interaction surface between S4 and S5 is involved in control of translational fidelity.

Its function is as follows. One of the primary rRNA binding proteins, it binds directly to 16S rRNA where it nucleates assembly of the body of the 30S subunit. With S5 and S12 plays an important role in translational accuracy. In Chloroherpeton thalassium (strain ATCC 35110 / GB-78), this protein is Small ribosomal subunit protein uS4.